We begin with the raw amino-acid sequence, 144 residues long: uncharacterized protein (144 aa).

A signal peptide spans 1–22 (MCTDVAFFSLDCLATWLGGVCS).

This is an uncharacterized protein from Saccharomyces cerevisiae (strain ATCC 204508 / S288c) (Baker's yeast).